A 675-amino-acid polypeptide reads, in one-letter code: TOM1-like protein 9 (675 aa).

A VHS domain is found at 9-138 (ATSEMLIGPD…ELLRAGAVFP (130 aa)). Disordered stretches follow at residues 144-181 (SAPVFTPPQTQPLTSYPPNLRNAGPGNDVPEPSAEPEF), 270-322 (LPGT…QLAL), 371-524 (FSDN…YAQM), 542-561 (QNGVYMPNQPNQALGSGYQP), and 622-675 (RDQT…AGTM). One can recognise a GAT domain in the interval 180–268 (EFPTLSLSEI…VLTNYEAIAS (89 aa)). Composition is skewed to polar residues over residues 299–317 (GDSSNQANGATSSSGNGVL) and 372–435 (SDNT…GQGV). Over residues 436 to 451 (SSPWSSQPAQQPVQPS) the composition is skewed to low complexity. 2 stretches are compositionally biased toward polar residues: residues 470–481 (QDYSPSAESGSP) and 488–524 (PTQTAFTHAQPVNNNNPYPQIPQTGPPVNNNSPYAQM). A compositionally biased stretch (basic and acidic residues) spans 646 to 661 (NKPEDKLFGDLVDISK).

The protein belongs to the TOM1 family. As to quaternary structure, interacts with ELC/VPS23A and ELCL/VPS23B. In terms of tissue distribution, ubiquitously expressed.

The protein resides in the cytoplasm. Its subcellular location is the membrane. Its function is as follows. Might contribute to the loading of the ESCRT machinery. The polypeptide is TOM1-like protein 9 (Arabidopsis thaliana (Mouse-ear cress)).